A 96-amino-acid chain; its full sequence is Conantokin Rl-C (96 aa).

A signal peptide spans 1-21; it reads MQLYTYLYLLVPLVTFHLILG. Residues 22–78 constitute a propeptide that is removed on maturation; that stretch reads TGTLDHGDALTERRSADATALKPEPVLLQKSSARSTDDNGKDTQMKRIFKKRRNKAR. The disordered stretch occupies residues 36–85; it reads SADATALKPEPVLLQKSSARSTDDNGKDTQMKRIFKKRRNKARGEEELSE. Positions 56-66 are enriched in basic and acidic residues; the sequence is STDDNGKDTQM. Glu-81 contributes to the a divalent metal cation binding site. 5 positions are modified to 4-carboxyglutamate: Glu-81, Glu-82, Glu-85, Glu-89, and Glu-93. Glu-85, Glu-89, and Glu-93 together coordinate a divalent metal cation. An Asparagine amide modification is found at Asn-96.

This sequence belongs to the conotoxin B superfamily. It depends on Ca(2+) as a cofactor. The cofactor is Mg(2+). In terms of tissue distribution, expressed by the venom duct.

It is found in the secreted. In terms of biological role, conantokins inhibit N-methyl-D-aspartate (NMDA) receptors. This toxin has antagonist activity on NR2B/GRIN2B (IC(50)=1.4 uM) and NR2A/GRIN2A (IC(50)=2.9 uM) subunits, when tested on rat receptors. The chain is Conantokin Rl-C from Conus rolani (Cone snail).